A 311-amino-acid chain; its full sequence is Malate dehydrogenase (311 aa).

NAD(+) contacts are provided by residues 7 to 13 (GAAGGIG) and aspartate 34. The substrate site is built by arginine 81 and arginine 87. NAD(+) is bound by residues asparagine 94 and 117-119 (ITN). The substrate site is built by asparagine 119 and arginine 153. Histidine 177 serves as the catalytic Proton acceptor. NAD(+) is bound at residue methionine 227.

This sequence belongs to the LDH/MDH superfamily. MDH type 1 family. As to quaternary structure, homodimer.

It catalyses the reaction (S)-malate + NAD(+) = oxaloacetate + NADH + H(+). Functionally, catalyzes the reversible oxidation of malate to oxaloacetate. The protein is Malate dehydrogenase of Shewanella sediminis (strain HAW-EB3).